The following is a 37-amino-acid chain: Large ribosomal subunit protein bL36c (37 aa).

This sequence belongs to the bacterial ribosomal protein bL36 family.

It localises to the plastid. The protein localises to the chloroplast. The chain is Large ribosomal subunit protein bL36c (rpl36) from Porphyra purpurea (Red seaweed).